The chain runs to 66 residues: DNA-directed RNA polymerase subunit omega (66 aa).

It belongs to the RNA polymerase subunit omega family. In terms of assembly, the RNAP catalytic core consists of 2 alpha, 1 beta, 1 beta' and 1 omega subunit. When a sigma factor is associated with the core the holoenzyme is formed, which can initiate transcription.

The enzyme catalyses RNA(n) + a ribonucleoside 5'-triphosphate = RNA(n+1) + diphosphate. Promotes RNA polymerase assembly. Latches the N- and C-terminal regions of the beta' subunit thereby facilitating its interaction with the beta and alpha subunits. The chain is DNA-directed RNA polymerase subunit omega from Geobacillus kaustophilus (strain HTA426).